The primary structure comprises 320 residues: tRNA dimethylallyltransferase (320 aa).

10–17 (GPTASGKT) serves as a coordination point for ATP. 12-17 (TASGKT) is a binding site for substrate. Interaction with substrate tRNA regions lie at residues 35 to 38 (DSAL), 159 to 163 (QRIQR), and 241 to 246 (RCVGYR).

Belongs to the IPP transferase family. As to quaternary structure, monomer. It depends on Mg(2+) as a cofactor.

The enzyme catalyses adenosine(37) in tRNA + dimethylallyl diphosphate = N(6)-dimethylallyladenosine(37) in tRNA + diphosphate. Functionally, catalyzes the transfer of a dimethylallyl group onto the adenine at position 37 in tRNAs that read codons beginning with uridine, leading to the formation of N6-(dimethylallyl)adenosine (i(6)A). This is tRNA dimethylallyltransferase from Aromatoleum aromaticum (strain DSM 19018 / LMG 30748 / EbN1) (Azoarcus sp. (strain EbN1)).